A 124-amino-acid chain; its full sequence is KESAAAKFERQHMDPSTSSASSSNYCNQMMQSRKMTQDRCKPVNTFVHESLADVQAVCFQKNVACKNGQSNCYQSNSAMHITDCRESGNSKYPNCVYKATQAEKHIIVACEGNPYVPVHFDASV.

A compositionally biased stretch (basic and acidic residues) spans 1 to 13 (KESAAAKFERQHM). The disordered stretch occupies residues 1-24 (KESAAAKFERQHMDPSTSSASSSN). Substrate-binding residues include Lys-7 and Arg-10. The active-site Proton acceptor is His-12. 4 disulfides stabilise this stretch: Cys-26–Cys-84, Cys-40–Cys-95, Cys-58–Cys-110, and Cys-65–Cys-72. Residues 41–45 (KPVNT), Lys-66, and Arg-85 contribute to the substrate site. Catalysis depends on His-119, which acts as the Proton donor.

It belongs to the pancreatic ribonuclease family. As to quaternary structure, monomer. Interacts with and forms tight 1:1 complexes with RNH1. Dimerization of two such complexes may occur. Interaction with RNH1 inhibits this protein. Pancreas.

It is found in the secreted. It carries out the reaction an [RNA] containing cytidine + H2O = an [RNA]-3'-cytidine-3'-phosphate + a 5'-hydroxy-ribonucleotide-3'-[RNA].. The catalysed reaction is an [RNA] containing uridine + H2O = an [RNA]-3'-uridine-3'-phosphate + a 5'-hydroxy-ribonucleotide-3'-[RNA].. Its function is as follows. Endonuclease that catalyzes the cleavage of RNA on the 3' side of pyrimidine nucleotides. Acts on single-stranded and double-stranded RNA. In Cervus elaphus (Red deer), this protein is Ribonuclease pancreatic (RNASE1).